The primary structure comprises 355 residues: Peptide chain release factor 1 (355 aa).

Residue glutamine 233 is modified to N5-methylglutamine. The span at 280 to 293 (ERRKKEQERADSRR) shows a compositional bias: basic and acidic residues. The disordered stretch occupies residues 280-306 (ERRKKEQERADSRRGQVGSGNRSERIR).

This sequence belongs to the prokaryotic/mitochondrial release factor family. In terms of processing, methylated by PrmC. Methylation increases the termination efficiency of RF1.

The protein resides in the cytoplasm. Functionally, peptide chain release factor 1 directs the termination of translation in response to the peptide chain termination codons UAG and UAA. The polypeptide is Peptide chain release factor 1 (Rickettsia africae (strain ESF-5)).